We begin with the raw amino-acid sequence, 664 residues long: Frizzled-3 (664 aa).

The first 16 residues, M1 to A16, serve as a signal peptide directing secretion. The Extracellular portion of the chain corresponds to Q17–F204. The region spanning H22–P135 is the FZ domain. Cystine bridges form between C27-C88, C35-C81, C72-C109, C98-C132, and C102-C126. The N-linked (GlcNAc...) asparagine glycan is linked to N41. The chain crosses the membrane as a helical span at residues I205–I225. Residues D226–P236 lie on the Cytoplasmic side of the membrane. A helical membrane pass occupies residues I237–L257. The Extracellular segment spans residues E258–M287. Residues L288–I308 form a helical membrane-spanning segment. The Cytoplasmic segment spans residues T309–A327. The helical transmembrane segment at L328–M348 threads the bilayer. The Extracellular segment spans residues N349–F373. N355 is a glycosylation site (N-linked (GlcNAc...) asparagine). Residues V374–I394 traverse the membrane as a helical segment. At S395–R419 the chain is on the cytoplasmic side. Residues I420–Y440 form a helical membrane-spanning segment. Residues E441 to L476 lie on the Extracellular side of the membrane. The helical transmembrane segment at I477 to V497 threads the bilayer. Residues G498–A664 lie on the Cytoplasmic side of the membrane. A Lys-Thr-X-X-X-Trp motif, mediates interaction with the PDZ domain of Dvl family members motif is present at residues K501–W506. Residues R537–A664 are disordered. 2 stretches are compositionally biased toward polar residues: residues G549–L564 and K573–H585.

This sequence belongs to the G-protein coupled receptor Fz/Smo family. As to expression, expression restricted to the early nervous system.

It localises to the membrane. The protein localises to the cell membrane. Its subcellular location is the cell surface. It is found in the apical cell membrane. Functionally, receptor for Wnt proteins. Most of frizzled receptors are coupled to the beta-catenin canonical signaling pathway, which leads to the activation of disheveled proteins, inhibition of GSK-3 kinase, nuclear accumulation of beta-catenin and activation of Wnt target genes. A second signaling pathway involving PKC and calcium fluxes has been seen for some family members, but it is not yet clear if it represents a distinct pathway or if it can be integrated in the canonical pathway, as PKC seems to be required for Wnt-mediated inactivation of GSK-3 kinase. Both pathways seem to involve interactions with G-proteins. Activated by Wnt8. Involved in transduction and intercellular transmission of polarity information during tissue morphogenesis and/or in differentiated tissues. Plays a role in controlling early axon growth and guidance processes necessary for the formation of a subset of central and peripheral major fiber tracts. Involved in the migration of cranial neural crest cells. May also be implicated in the transmission of sensory information from the trunk and limbs to the brain. Controls commissural sensory axons guidance after midline crossing along the anterior-posterior axis in the developing spinal cord in a Wnt-dependent signaling pathway. Together with FZD6, is involved in the neural tube closure and plays a role in the regulation of the establishment of planar cell polarity (PCP). Promotes neurogenesis by maintaining sympathetic neuroblasts within the cell cycle in a beta-catenin-dependent manner. The protein is Frizzled-3 (fzd3) of Xenopus laevis (African clawed frog).